The chain runs to 266 residues: MNANSDKPLEANQEISEAKRKKIPNSFLACMSIISSLFVYSISEENEIKSSLALRFIVTSSTFSYVIFSFSSCLHANLMLWKSDIKESSVTQKILYFLVNIISVVLIVASLLSIVGIPINSWTYTKGPLTALFPSLVLFDYLASSLLNSALGAVSLTDSNNHLDLVLLLLSSFLITSREWDNDFECSLYLSIASSIILLIMSLEDEDALPSTEEPSFVARTKVVIFTIVLLLVAIIHVFLGCISIGIIVDAIKKGLFSMHNTNKRY.

Belongs to the UPF0328 family.

This is UPF0328 protein ECU03_0130 from Encephalitozoon cuniculi (strain GB-M1) (Microsporidian parasite).